A 240-amino-acid polypeptide reads, in one-letter code: UDP-2,3-diacylglucosamine hydrolase (240 aa).

The Mn(2+) site is built by D8, H10, D41, N79, and H114. Position 79 to 80 (79 to 80) interacts with substrate; the sequence is NR. Positions 122, 160, 164, 167, and 195 each coordinate substrate. Positions 195 and 197 each coordinate Mn(2+).

This sequence belongs to the LpxH family. It depends on Mn(2+) as a cofactor.

It localises to the cell inner membrane. It carries out the reaction UDP-2-N,3-O-bis[(3R)-3-hydroxytetradecanoyl]-alpha-D-glucosamine + H2O = 2-N,3-O-bis[(3R)-3-hydroxytetradecanoyl]-alpha-D-glucosaminyl 1-phosphate + UMP + 2 H(+). It functions in the pathway glycolipid biosynthesis; lipid IV(A) biosynthesis; lipid IV(A) from (3R)-3-hydroxytetradecanoyl-[acyl-carrier-protein] and UDP-N-acetyl-alpha-D-glucosamine: step 4/6. In terms of biological role, hydrolyzes the pyrophosphate bond of UDP-2,3-diacylglucosamine to yield 2,3-diacylglucosamine 1-phosphate (lipid X) and UMP by catalyzing the attack of water at the alpha-P atom. Involved in the biosynthesis of lipid A, a phosphorylated glycolipid that anchors the lipopolysaccharide to the outer membrane of the cell. The polypeptide is UDP-2,3-diacylglucosamine hydrolase (Salmonella dublin (strain CT_02021853)).